Here is a 250-residue protein sequence, read N- to C-terminus: Alpha/beta hydrolase nvfD (250 aa).

Residues aspartate 198 and histidine 226 each act as charge relay system in the active site.

This sequence belongs to the AB hydrolase superfamily.

Its pathway is secondary metabolite biosynthesis; terpenoid biosynthesis. In terms of biological role, alpha/beta hydrolase; part of the gene cluster that mediates the biosynthesis of novofumigatonin, a heavily oxygenated meroterpenoid containing a unique orthoester moiety. The first step of the pathway is the synthesis of 3,5-dimethylorsellinic acid (DMOA) by the polyketide synthase nvfA via condensation of one acetyl-CoA starter unit with 3 malonyl-CoA units and 2 methylations. DMOA is then converted to farnesyl-DMOA by the farnesyltransferase nvfB. Epoxydation by FAD-dependent monooxygenase nvfK, followed by a protonation-initiated cyclization catalyzed by the terpene cyclase nvfL leads to the production of asnavolin H. The short chain dehydrogenase nvfC then as a 3-OH dehydrogenase of asnovolin H to yield chemesin D. There are two branches to synthesize asnovolin A from chemesin D. In one branch, chemesin D undergoes Baeyer-Villiger oxidation by nvfH, methylation by nvfJ, and enoyl reduction by the nvfM D enoylreductase that reduces the double bond between C-5'and C-6', to form respectively asnovolin I, asnovolin K, and asnovolin A. In the other branch, the methylation precedes the Baeyer-Villiger oxidation and the enoyl reduction to yield asnovolin A via the asnovolin J intermediate. Asnovolin A is further converted to fumigatonoid A by the Fe(II)/2-oxoglutarate-dependent dioxygenase nvfI that catalyzes an endoperoxidation reaction. The alpha/beta hydrolase nvfD then acts as an epimerase that converts fumigatonoid A to its C-5' epimer, which then undergoes spontaneous or nvfD-catalyzed lactonization. The following step utilizes the ketoreductase nvfG to produce fumigatonoid B. The dioxygenase nvfE further converts fumigatonoid B into fumigatonoid C. Finally the Fe(II)/2-oxoglutarate-dependent dioxygenase nvfF catalyzes two rounds of oxidation to transform fumigatonoid C into the end product, novofumigatonin A. In Aspergillus novofumigatus (strain IBT 16806), this protein is Alpha/beta hydrolase nvfD.